Reading from the N-terminus, the 444-residue chain is MARSRNRFDRTPFQTAITDLSHDGRGVARRDGEGGKVTFISGALPGEVVVAEPTARSRHFDEAKTVEVLQASPQRVAPRCPHFGVCAGCVLQHLEESQQIVAKQRVLMDNLERIGHVTPQTVLPALVGDTWGYRRKGRFSVRRVEKKDKTLVGFRELDPRFVADLSVCYTVIPQIGEKIPQLAALVEGMDGKRDIPQIEFIAGDDAVALTIRHLQPLSARDEQALVEFAQAHDFAIFLQPGGVDSVHPLWPQEVPLSFRLPKWDVELAFRPLDFIQVNASLNQKMIAHALALLDAKPDDRVLDLFCGLGNFTLPLARTVREVVGVEGDAGLVARARENAQRNGLDNAQFYAADLTQDQRQTAWMRQGFDKLLLDPPRSGAIDVLQQLPLKQFKRIVYVSCHPGSLARDAGYLVNEQGFSLLSAGAMDMFPHTAHVESIAVFEKR.

In terms of domain architecture, TRAM spans 5-67 (RNRFDRTPFQ…RHFDEAKTVE (63 aa)). Residues cysteine 80, cysteine 86, cysteine 89, and cysteine 168 each coordinate [4Fe-4S] cluster. S-adenosyl-L-methionine is bound by residues glutamine 276, phenylalanine 305, asparagine 310, glutamate 326, aspartate 353, and aspartate 374. Catalysis depends on cysteine 400, which acts as the Nucleophile.

It belongs to the class I-like SAM-binding methyltransferase superfamily. RNA M5U methyltransferase family. RlmD subfamily.

The catalysed reaction is uridine(1939) in 23S rRNA + S-adenosyl-L-methionine = 5-methyluridine(1939) in 23S rRNA + S-adenosyl-L-homocysteine + H(+). Its function is as follows. Catalyzes the formation of 5-methyl-uridine at position 1939 (m5U1939) in 23S rRNA. The polypeptide is 23S rRNA (uracil(1939)-C(5))-methyltransferase RlmD (Xanthomonas campestris pv. campestris (strain 8004)).